Reading from the N-terminus, the 186-residue chain is UPF0301 protein Saro_0683 (186 aa).

This sequence belongs to the UPF0301 (AlgH) family.

This is UPF0301 protein Saro_0683 from Novosphingobium aromaticivorans (strain ATCC 700278 / DSM 12444 / CCUG 56034 / CIP 105152 / NBRC 16084 / F199).